The following is a 296-amino-acid chain: SHSP domain-containing protein CPUR_05420 (296 aa).

Positions 50-83 (AWQTCPQQRHPHQPDVSGPPGSGFGEQPSQDTPN) are disordered. Residues 169-296 (ETKKSFTPDI…GKGVKEITIV (128 aa)) form the sHSP domain.

It belongs to the small heat shock protein (HSP20) family.

Functionally, monooxygenase; part of the ergochrome gene cluster responsible for the typical purple-black color of the ergot sclerotia. The ergochrome gene cluster produces several ergot pigments including the yellow ergochrome secalonic acid and its derivatives, as well as the red anthraquinones endocrocin and clavorubin. The pathway begins with the synthesis of atrochrysone thioester by the polyketide synthase (PKS) CPUR_05437. The atrochrysone carboxyl ACP thioesterase CPUR_05436 then breaks the thioester bond and releases the atrochrysone carboxylic acid from CPUR_05437. The atrochrysone carboxylic acid is then converted to atrochrysone which is further transformed into emodin anthrone. The next step is performed by the anthrone oxygenase CPUR_05434 that catalyzes the oxidation of emodinanthrone to emodin. Emodin is further modified to yield monodictyphenone via several steps involving CPUR_05427, CPUR_05428, CPUR_05429 and CPUR_05430. The short chain dehydrogenase/reductase CPUR_05418 then catalyzes the C-5 ketoreduction to give the xanthone skeleton of the monomeric units. Ergochromes formation requires further dimerization steps of different xanthone units, probably catalyzed by the cytochrome P450 monooxygenase CPUR_05419. CPUR_05425, CPUR_05426 and CPUR_05431 are unique to Claviceps, thus it is likely that they are involved in further modification of xanthone units or in their dimerization. The yellow ergochromes and the red anthraquinone pigments endocrocin and clavorubin are products from the same PKS derived precursors and the latter are likely shunt products in the pathway of xanthone biosynthesis. It is proposed that atrochrysone carboxylic acid released from the PKS CPUR_05437 can also be converted to endocrocin anthrone which is further oxidized into endocrocin by CPUR_05435. Endocrocin could be then modified to clavorubin, possibly by CPUR_05423 and CPUR_05431. Clavorubin is the principal anthraquinone metabolite produced by the cluster with a much higher yield compared to endocrocin. This chain is SHSP domain-containing protein CPUR_05420, found in Claviceps purpurea (strain 20.1) (Ergot fungus).